The chain runs to 335 residues: 2-acylglycerol O-acyltransferase 1 (335 aa).

A run of 2 helical transmembrane segments spans residues 24-44 (WVFS…SLVL) and 47-67 (LWLI…TPQA). N77, N125, and N180 each carry an N-linked (GlcNAc...) asparagine glycan.

It belongs to the diacylglycerol acyltransferase family.

It localises to the endoplasmic reticulum membrane. It catalyses the reaction a 2-acylglycerol + an acyl-CoA = a 1,2-diacylglycerol + CoA. The enzyme catalyses a 2-acylglycerol + an acyl-CoA = a 1,2-diacyl-sn-glycerol + CoA. The catalysed reaction is a 2-acylglycerol + an acyl-CoA = a 2,3-diacyl-sn-glycerol + CoA. It carries out the reaction a 1-acylglycerol + an acyl-CoA = a 1,2-diacylglycerol + CoA. It catalyses the reaction a 1-acylglycerol + an acyl-CoA = a 1,3-diacylglycerol + CoA. The enzyme catalyses a 1-acyl-sn-glycerol + an acyl-CoA = a 1,3-diacyl-sn-glycerol + CoA. The catalysed reaction is a 3-acyl-sn-glycerol + an acyl-CoA = a 1,3-diacyl-sn-glycerol + CoA. It functions in the pathway glycerolipid metabolism; triacylglycerol biosynthesis. Functionally, involved in glycerolipid synthesis and lipid metabolism. Catalyzes the formation of diacylglycerol, the precursor of triacylglycerol, by transferring the acyl chain of a fatty acyl-CoA to a monoacylglycerol, mainly at the sn-1 or sn-3 positions. It uses both sn-2-monoacylglycerol (2-acylglycerol) and sn-1-monoacylglycerol (1-acyl-sn-glycerol) equally well as substrates, and uses sn-3-monoacylglycerol (3-acyl-sn-glycerol) with lower efficiency. In Xenopus tropicalis (Western clawed frog), this protein is 2-acylglycerol O-acyltransferase 1 (mogat1).